Consider the following 152-residue polypeptide: Atypical leghemoglobin 2-1 (152 aa).

The 150-residue stretch at 3-152 (TFSEEQEALV…LAGVIKKGMS (150 aa)) folds into the Globin domain. Residue tyrosine 31 is modified to Nitrated tyrosine. A heme b-binding site is contributed by serine 46. Serine 46 bears the Phosphoserine mark. Histidine 64 lines the O2 pocket. 3 residues coordinate heme b: lysine 67, histidine 99, and arginine 102. Tyrosine 140 is subject to Nitrated tyrosine.

Belongs to the plant globin family. In terms of assembly, monomer. Nitrated in effective nodules and particularly in hypoxic conditions; this mechanism may play a protective role in the symbiosis by buffering toxic peroxynitrite NO(2)(-). Nitration level decrease during nodule senescence. In terms of processing, phosphorylation at Ser-46 disrupts the molecular environment of its porphyrin ring oxygen binding pocket, thus leading to a reduced oxygen consumption and to the delivery of oxygen O(2) to symbiosomes. As to expression, mainly expressed in leaves and, at low levels, in roots of non-nodulated plants. However, accumulates also in nodules and roots, and, to a lower extent, in leaves, stems, flowers and fruits, in nodulated plants.

Atypical leghemoglobin that reversibly binds oxygen O(2) through a pentacoordinated heme iron. In nodules, facilitates the diffusion of oxygen to the bacteroids while preventing the bacterial nitrogenase from being inactivated by buffering dioxygen, nitric oxide and carbon monoxide. This role is essential for symbiotic nitrogen fixation (SNF). Seems not restricted to symbiotic nitrogen fixation and root nodules formation, but also contributes to general plant development and metabolism. This chain is Atypical leghemoglobin 2-1, found in Lotus japonicus (Lotus corniculatus var. japonicus).